A 373-amino-acid polypeptide reads, in one-letter code: tRNA/tmRNA (uracil-C(5))-methyltransferase (373 aa).

S-adenosyl-L-methionine is bound by residues Q190, Y219, N224, E240, and D300. The active-site Nucleophile is C325. E359 (proton acceptor) is an active-site residue.

The protein belongs to the class I-like SAM-binding methyltransferase superfamily. RNA M5U methyltransferase family. TrmA subfamily.

It carries out the reaction uridine(54) in tRNA + S-adenosyl-L-methionine = 5-methyluridine(54) in tRNA + S-adenosyl-L-homocysteine + H(+). It catalyses the reaction uridine(341) in tmRNA + S-adenosyl-L-methionine = 5-methyluridine(341) in tmRNA + S-adenosyl-L-homocysteine + H(+). Functionally, dual-specificity methyltransferase that catalyzes the formation of 5-methyluridine at position 54 (m5U54) in all tRNAs, and that of position 341 (m5U341) in tmRNA (transfer-mRNA). The polypeptide is tRNA/tmRNA (uracil-C(5))-methyltransferase (Chromohalobacter salexigens (strain ATCC BAA-138 / DSM 3043 / CIP 106854 / NCIMB 13768 / 1H11)).